The sequence spans 448 residues: Probable glycine dehydrogenase (decarboxylating) subunit 1 (448 aa).

The protein belongs to the GcvP family. N-terminal subunit subfamily. The glycine cleavage system is composed of four proteins: P, T, L and H. In this organism, the P 'protein' is a heterodimer of two subunits.

It carries out the reaction N(6)-[(R)-lipoyl]-L-lysyl-[glycine-cleavage complex H protein] + glycine + H(+) = N(6)-[(R)-S(8)-aminomethyldihydrolipoyl]-L-lysyl-[glycine-cleavage complex H protein] + CO2. Functionally, the glycine cleavage system catalyzes the degradation of glycine. The P protein binds the alpha-amino group of glycine through its pyridoxal phosphate cofactor; CO(2) is released and the remaining methylamine moiety is then transferred to the lipoamide cofactor of the H protein. This Anoxybacillus flavithermus (strain DSM 21510 / WK1) protein is Probable glycine dehydrogenase (decarboxylating) subunit 1.